Here is a 286-residue protein sequence, read N- to C-terminus: NH(3)-dependent NAD(+) synthetase (286 aa).

Position 51-58 (51-58 (GISGGVDS)) interacts with ATP. Asp57 is a binding site for Mg(2+). Arg148 lines the deamido-NAD(+) pocket. Position 168 (Thr168) interacts with ATP. A Mg(2+)-binding site is contributed by Glu173. Deamido-NAD(+) is bound by residues Lys181 and Asp188. ATP-binding residues include Lys197 and Thr219. 268–269 (HK) serves as a coordination point for deamido-NAD(+).

This sequence belongs to the NAD synthetase family. In terms of assembly, homodimer.

It carries out the reaction deamido-NAD(+) + NH4(+) + ATP = AMP + diphosphate + NAD(+) + H(+). It participates in cofactor biosynthesis; NAD(+) biosynthesis; NAD(+) from deamido-NAD(+) (ammonia route): step 1/1. Its function is as follows. Catalyzes the ATP-dependent amidation of deamido-NAD to form NAD. Uses ammonia as a nitrogen source. In Paraburkholderia phytofirmans (strain DSM 17436 / LMG 22146 / PsJN) (Burkholderia phytofirmans), this protein is NH(3)-dependent NAD(+) synthetase.